The sequence spans 711 residues: MHWTSILSAILLFCLSGARASPAKTVIRNKVPLLVTNACTRIFQKVTWEYTSKSKRSSPVCSYEPAFQSMLYCIYETLDEKGYSNKTLEKTFSTIKKNCASYSDALQNMTNSEFYDVLNNGTRHMTPYVKGSANLTYPVEMDTQLRKAYYHALHGFYANLDVGNIYGGIICAYFVAIMAFAGVLHCMNYTPFKTVLLKQKLVGYVRGYLTLPTIGSKHASDFSYFRIFTGYLPTRLEGIIILGYLVLHTVFLAYGYEYDPENIIFKSRRVQVARYVADRSGVLAFAHFPLIVLFAGRNNFLEYISGVKYTSFIMFHKWLGRMMFLDAMIHGSAYTSYTVANKTWATSKNRLYWQFGVAALCLAGTMVFFSFAVFRKYFYEAFLFLHIVLGAMFFYACWEHVVSLSGIEWIYTAIAIWIVDRIIRIIKASYFGFPKASLQLIGDDLIRLTVKKPARPWRAKPGQYVFVSFLHPLYFWQSHPFTVLDSVSKNGELVIILKEKKGVTRLVKKYVCRNGGKTSMRLAIEGPYGSSSPVNNYNNVLLLTGGTGLPGPIAHAIKLGKTSAAAGKQSVKLVIAVRGFDVLEAYKPELMCLENLNVQLHIYNTMEVPSLTPSDSLDISQQDEKADEKGTVVATTLEKSANPLGFDGVVFHCGRPNVKELLHEAAELSGSLSVVCCGPPIFVDKVRNETAKIVLDKSAKAIEYFEEYQCW.

Positions 1–23 (MHWTSILSAILLFCLSGARASPA) are cleaved as a signal peptide. Residues 24-164 (KTVIRNKVPL…GFYANLDVGN (141 aa)) lie on the Extracellular side of the membrane. N-linked (GlcNAc...) asparagine glycans are attached at residues Asn-85, Asn-108, Asn-120, and Asn-134. Residues 165–185 (IYGGIICAYFVAIMAFAGVLH) traverse the membrane as a helical segment. The Cytoplasmic segment spans residues 186-235 (CMNYTPFKTVLLKQKLVGYVRGYLTLPTIGSKHASDFSYFRIFTGYLPTR). A helical membrane pass occupies residues 236 to 256 (LEGIIILGYLVLHTVFLAYGY). Topologically, residues 257-280 (EYDPENIIFKSRRVQVARYVADRS) are extracellular. In terms of domain architecture, Ferric oxidoreductase spans 280–414 (SGVLAFAHFP…SGIEWIYTAI (135 aa)). Residues 281-301 (GVLAFAHFPLIVLFAGRNNFL) traverse the membrane as a helical segment. At 302-317 (EYISGVKYTSFIMFHK) the chain is on the cytoplasmic side. Heme contacts are provided by His-316 and His-330. The helical transmembrane segment at 318–340 (WLGRMMFLDAMIHGSAYTSYTVA) threads the bilayer. N-linked (GlcNAc...) asparagine glycosylation is present at Asn-341. Residues 341–353 (NKTWATSKNRLYW) are Extracellular-facing. A helical transmembrane segment spans residues 354-374 (QFGVAALCLAGTMVFFSFAVF). The Cytoplasmic portion of the chain corresponds to 375–377 (RKY). A helical membrane pass occupies residues 378–398 (FYEAFLFLHIVLGAMFFYACW). Heme is bound by residues His-386 and His-400. The Extracellular portion of the chain corresponds to 399–400 (EH). A helical membrane pass occupies residues 401-423 (VVSLSGIEWIYTAIAIWIVDRII). The FAD-binding FR-type domain maps to 415 to 534 (AIWIVDRIIR…EGPYGSSSPV (120 aa)). Over 424-711 (RIIKASYFGF…IEYFEEYQCW (288 aa)) the chain is Cytoplasmic. An FAD-binding site is contributed by 479 to 485 (HPFTVLD). NADP(+) contacts are provided by residues 526 to 529 (GPYG) and 677 to 678 (CG).

This sequence belongs to the ferric reductase (FRE) family. FAD is required as a cofactor. Requires heme as cofactor.

It localises to the cell membrane. It catalyses the reaction 2 a Fe(II)-siderophore + NADP(+) + H(+) = 2 a Fe(III)-siderophore + NADPH. In terms of biological role, metalloreductase responsible for reducing extracellular iron and copper prior to import. Catalyzes the reductive uptake of Fe(3+)-salts and Fe(3+) bound to catecholate or hydroxamate siderophores. Fe(3+) is reduced to Fe(2+), which then dissociates from the siderophore and can be imported by the high-affinity Fe(2+) transport complex in the plasma membrane. Also participates in Cu(2+) reduction and Cu(+) uptake. This chain is Ferric/cupric reductase transmembrane component 2 (FRE2), found in Saccharomyces cerevisiae (strain ATCC 204508 / S288c) (Baker's yeast).